A 186-amino-acid chain; its full sequence is UPF0301 protein PM1869 (186 aa).

This sequence belongs to the UPF0301 (AlgH) family.

The protein is UPF0301 protein PM1869 of Pasteurella multocida (strain Pm70).